We begin with the raw amino-acid sequence, 295 residues long: MNIGRIVTAMVTPFNEQDQVNLEATCQLVNELIANGSDALVVGGTTGESPTLTTDEKMALFHTVVEAAGGRVPVIAGTGSNNTRASIELSKKVEDLGVDGIMLVTPYYNKPSQEGLFQHFKAISESTSLPIMLYNIPGRSGVNLDAETTLRLAELRNIVSIKEASGNLDQIAEIIEHSPADFSVYSGDDSLTLPLLSIGGTGVVSVASHIIGNEMQEMVQLFLSGQVERAAAIHRKLLPLMKTLFMTPNPTAVKAALELKGLPVGHVRLPLVPLTAEEQRQLELAINPQFNMFVS.

T46 contacts pyruvate. Y134 acts as the Proton donor/acceptor in catalysis. K162 (schiff-base intermediate with substrate) is an active-site residue. A pyruvate-binding site is contributed by V204.

Belongs to the DapA family. As to quaternary structure, homotetramer; dimer of dimers.

It is found in the cytoplasm. The catalysed reaction is L-aspartate 4-semialdehyde + pyruvate = (2S,4S)-4-hydroxy-2,3,4,5-tetrahydrodipicolinate + H2O + H(+). Its pathway is amino-acid biosynthesis; L-lysine biosynthesis via DAP pathway; (S)-tetrahydrodipicolinate from L-aspartate: step 3/4. Functionally, catalyzes the condensation of (S)-aspartate-beta-semialdehyde [(S)-ASA] and pyruvate to 4-hydroxy-tetrahydrodipicolinate (HTPA). The protein is 4-hydroxy-tetrahydrodipicolinate synthase 1 of Halalkalibacterium halodurans (strain ATCC BAA-125 / DSM 18197 / FERM 7344 / JCM 9153 / C-125) (Bacillus halodurans).